Reading from the N-terminus, the 765-residue chain is MSEEPRFDTVAKAAATPDLPQPYTELGMKDEEYARVREILGRRPTSAELAIYSVMWSEHCSYKSSKVHLRQFGEKAPDTDVLLVGIGENAGVVDVGDGYAVTFKIESHNHPSYVEPHQGAATGVGGIVRDILSMGARPVAVMDSLRFGPADAPDTQRVLPGVVSGISSYGNCLGLPNIGGEVGFDAGYASNPLVNALCVGVLKHENIKLAQASGPGNHVVLFGAATGPDGIGGASVLASASFDEESQAKRPSVQVGDPFLEKLLIECCMELYAKDLVVGIQDLGAAGVSCATTELAAGGTGGMRIELDRVPLRDPRLTPEEILMSESQERMMAIVEPDKLDEFLAVCAKWDILASVIGEVTDVTPEEEARGGRLVMTWRGETIVDLPPRTAADQGPVYHRPIERPADQDALLADDPAALPRPSSDEELRDQVLRVLAAPGICDSSWITDQYDRYVMGNTVLAMPHDSGMIRIAEDTDRGVALATDGNGRYTRLDPYVGTQLAYAEAYRNVAATGARPLAVTNCLNFGSPEDPGVMWQFAEATRGLADACQALGTPVTGGNVSFYNQTGSTAINPTPVIGVLGVIDDVHKRVTSAFSAEGESVVFLLGETRLELGGSAWADVIHGHLGGRPPQIDLDAEAALGRVLIDGAAAELLVSAHDLSDGGLAVALAESCLRGGVGCEVDLGDDAFTALFSESAARAVVSVRPEHETALVDLCAKHGVPVRRLGTVGGSALTMVHRTGRISIEVAELRDAYESTLPALFGNK.

Histidine 59 is an active-site residue. Residues tyrosine 62 and lysine 104 each contribute to the ATP site. Position 106 (glutamate 106) interacts with Mg(2+). Substrate is bound by residues 107–110 and arginine 129; that span reads SHNH. The active-site Proton acceptor is the histidine 108. Aspartate 130 lines the Mg(2+) pocket. Residue glutamine 254 participates in substrate binding. A Mg(2+)-binding site is contributed by aspartate 282. 326-328 is a binding site for substrate; sequence ESQ. ATP contacts are provided by asparagine 522 and glycine 559. Position 560 (asparagine 560) interacts with Mg(2+). Serine 562 lines the substrate pocket.

Belongs to the FGAMS family. As to quaternary structure, monomer. Part of the FGAM synthase complex composed of 1 PurL, 1 PurQ and 2 PurS subunits.

Its subcellular location is the cytoplasm. The catalysed reaction is N(2)-formyl-N(1)-(5-phospho-beta-D-ribosyl)glycinamide + L-glutamine + ATP + H2O = 2-formamido-N(1)-(5-O-phospho-beta-D-ribosyl)acetamidine + L-glutamate + ADP + phosphate + H(+). The protein operates within purine metabolism; IMP biosynthesis via de novo pathway; 5-amino-1-(5-phospho-D-ribosyl)imidazole from N(2)-formyl-N(1)-(5-phospho-D-ribosyl)glycinamide: step 1/2. Part of the phosphoribosylformylglycinamidine synthase complex involved in the purines biosynthetic pathway. Catalyzes the ATP-dependent conversion of formylglycinamide ribonucleotide (FGAR) and glutamine to yield formylglycinamidine ribonucleotide (FGAM) and glutamate. The FGAM synthase complex is composed of three subunits. PurQ produces an ammonia molecule by converting glutamine to glutamate. PurL transfers the ammonia molecule to FGAR to form FGAM in an ATP-dependent manner. PurS interacts with PurQ and PurL and is thought to assist in the transfer of the ammonia molecule from PurQ to PurL. In Thermobifida fusca (strain YX), this protein is Phosphoribosylformylglycinamidine synthase subunit PurL.